The sequence spans 258 residues: NAD kinase (258 aa).

The Proton acceptor role is filled by Asp45. Residues Asp45–Gly46, Asn117–Glu118, Asp147, Ala155, Thr158–Ser163, and Ala182 each bind NAD(+).

This sequence belongs to the NAD kinase family. Requires a divalent metal cation as cofactor.

The protein localises to the cytoplasm. It carries out the reaction NAD(+) + ATP = ADP + NADP(+) + H(+). In terms of biological role, involved in the regulation of the intracellular balance of NAD and NADP, and is a key enzyme in the biosynthesis of NADP. Catalyzes specifically the phosphorylation on 2'-hydroxyl of the adenosine moiety of NAD to yield NADP. The chain is NAD kinase from Xanthomonas campestris pv. campestris (strain 8004).